The sequence spans 272 residues: Eukaryotic translation initiation factor 3 subunit G (272 aa).

Disordered regions lie at residues 1-28 (MPAL…PTEI) and 157-188 (APTT…GRDD). In terms of domain architecture, RRM spans 190-268 (TAIRISNLSE…LILNVEWSKP (79 aa)).

It belongs to the eIF-3 subunit G family. As to quaternary structure, component of the eukaryotic translation initiation factor 3 (eIF-3) complex.

The protein resides in the cytoplasm. In terms of biological role, RNA-binding component of the eukaryotic translation initiation factor 3 (eIF-3) complex, which is involved in protein synthesis of a specialized repertoire of mRNAs and, together with other initiation factors, stimulates binding of mRNA and methionyl-tRNAi to the 40S ribosome. The eIF-3 complex specifically targets and initiates translation of a subset of mRNAs involved in cell proliferation. This subunit can bind 18S rRNA. This Aedes aegypti (Yellowfever mosquito) protein is Eukaryotic translation initiation factor 3 subunit G.